A 302-amino-acid chain; its full sequence is Glutaminase (302 aa).

Substrate-binding residues include serine 61, asparagine 111, glutamate 155, asparagine 162, tyrosine 186, tyrosine 238, and valine 256.

It belongs to the glutaminase family. In terms of assembly, homotetramer.

It carries out the reaction L-glutamine + H2O = L-glutamate + NH4(+). The sequence is that of Glutaminase from Pseudomonas fluorescens (strain ATCC BAA-477 / NRRL B-23932 / Pf-5).